A 161-amino-acid polypeptide reads, in one-letter code: Nucleotide-binding protein Pnuc_0290 (161 aa).

Belongs to the YajQ family.

In terms of biological role, nucleotide-binding protein. In Polynucleobacter asymbioticus (strain DSM 18221 / CIP 109841 / QLW-P1DMWA-1) (Polynucleobacter necessarius subsp. asymbioticus), this protein is Nucleotide-binding protein Pnuc_0290.